Reading from the N-terminus, the 467-residue chain is Uronate isomerase (467 aa).

This sequence belongs to the metallo-dependent hydrolases superfamily. Uronate isomerase family.

The enzyme catalyses D-glucuronate = D-fructuronate. It catalyses the reaction aldehydo-D-galacturonate = keto-D-tagaturonate. It functions in the pathway carbohydrate metabolism; pentose and glucuronate interconversion. This is Uronate isomerase from Mannheimia succiniciproducens (strain KCTC 0769BP / MBEL55E).